We begin with the raw amino-acid sequence, 180 residues long: Crossover junction endodeoxyribonuclease RuvC (180 aa).

Active-site residues include Asp7, Glu66, and Asp138. The Mg(2+) site is built by Asp7, Glu66, and Asp138.

Belongs to the RuvC family. Homodimer which binds Holliday junction (HJ) DNA. The HJ becomes 2-fold symmetrical on binding to RuvC with unstacked arms; it has a different conformation from HJ DNA in complex with RuvA. In the full resolvosome a probable DNA-RuvA(4)-RuvB(12)-RuvC(2) complex forms which resolves the HJ. Mg(2+) is required as a cofactor.

The protein resides in the cytoplasm. The enzyme catalyses Endonucleolytic cleavage at a junction such as a reciprocal single-stranded crossover between two homologous DNA duplexes (Holliday junction).. In terms of biological role, the RuvA-RuvB-RuvC complex processes Holliday junction (HJ) DNA during genetic recombination and DNA repair. Endonuclease that resolves HJ intermediates. Cleaves cruciform DNA by making single-stranded nicks across the HJ at symmetrical positions within the homologous arms, yielding a 5'-phosphate and a 3'-hydroxyl group; requires a central core of homology in the junction. The consensus cleavage sequence is 5'-(A/T)TT(C/G)-3'. Cleavage occurs on the 3'-side of the TT dinucleotide at the point of strand exchange. HJ branch migration catalyzed by RuvA-RuvB allows RuvC to scan DNA until it finds its consensus sequence, where it cleaves and resolves the cruciform DNA. This Burkholderia orbicola (strain AU 1054) protein is Crossover junction endodeoxyribonuclease RuvC.